Here is a 125-residue protein sequence, read N- to C-terminus: Interferon-induced transmembrane protein 1 (125 aa).

At 1–36 (MHKEEHEVAVLGPPPSTILPRSTVINIHSETSVPDH) the chain is on the cytoplasmic side. At serine 16 the chain carries Phosphoserine. The segment at residues 37-57 (VVWSLFNTLFLNWCCLGFIAF) is an intramembrane region (helical). 3 S-palmitoyl cysteine lipidation sites follow: cysteine 50, cysteine 51, and cysteine 84. Over 58–86 (AYSVKSRDRKMVGDVTGAQAYASTAKCLN) the chain is Cytoplasmic. The segment at 84-125 (CLNIWALILGILMTIGFILLLVFGSVTVYHIMLQIIQEKRGY) is interaction with CAV1. A helical membrane pass occupies residues 87 to 107 (IWALILGILMTIGFILLLVFG). At 108-125 (SVTVYHIMLQIIQEKRGY) the chain is on the extracellular side.

The protein belongs to the CD225/Dispanin family. Interacts with CD81. Part of a complex composed of CD19, CR2/CD21, CD81 and IFITM1/CD225 in the membrane of mature B-cells. Interacts with CAV1; this interaction enhances the ability of CAV1 in inhibiting ERK activation. Post-translationally, palmitoylation on membrane-proximal cysteines controls clustering in membrane compartments and antiviral activity. Bone (at protein level). Levels greatly elevated in colon cancer, cervical cancer, esophageal cancer and ovarian cancer. Expressed in glioma cell lines.

It localises to the cell membrane. Its subcellular location is the lysosome membrane. IFN-induced antiviral protein which inhibits the entry of viruses to the host cell cytoplasm, permitting endocytosis, but preventing subsequent viral fusion and release of viral contents into the cytosol. Active against multiple viruses, including influenza A virus, SARS coronaviruses (SARS-CoV and SARS-CoV-2), Marburg virus (MARV), Ebola virus (EBOV), Dengue virus (DNV), West Nile virus (WNV), human immunodeficiency virus type 1 (HIV-1) and hepatitis C virus (HCV). Can inhibit: influenza virus hemagglutinin protein-mediated viral entry, MARV and EBOV GP1,2-mediated viral entry and SARS-CoV and SARS-CoV-2 S protein-mediated viral entry. Also implicated in cell adhesion and control of cell growth and migration. Inhibits SARS-CoV-2 S protein-mediated syncytia formation. Plays a key role in the antiproliferative action of IFN-gamma either by inhibiting the ERK activation or by arresting cell growth in G1 phase in a p53-dependent manner. Acts as a positive regulator of osteoblast differentiation. In hepatocytes, IFITM proteins act in a coordinated manner to restrict HCV infection by targeting the endocytosed HCV virion for lysosomal degradation. IFITM2 and IFITM3 display anti-HCV activity that may complement the anti-HCV activity of IFITM1 by inhibiting the late stages of HCV entry, possibly in a coordinated manner by trapping the virion in the endosomal pathway and targeting it for degradation at the lysosome. This chain is Interferon-induced transmembrane protein 1, found in Homo sapiens (Human).